Consider the following 458-residue polypeptide: Phosphoglucosamine mutase (458 aa).

Catalysis depends on serine 108, which acts as the Phosphoserine intermediate. Mg(2+)-binding residues include serine 108, aspartate 247, aspartate 249, and aspartate 251. A Phosphoserine modification is found at serine 108.

Belongs to the phosphohexose mutase family. The cofactor is Mg(2+). Activated by phosphorylation.

It catalyses the reaction alpha-D-glucosamine 1-phosphate = D-glucosamine 6-phosphate. Its function is as follows. Catalyzes the conversion of glucosamine-6-phosphate to glucosamine-1-phosphate. This is Phosphoglucosamine mutase from Nitrosomonas europaea (strain ATCC 19718 / CIP 103999 / KCTC 2705 / NBRC 14298).